The chain runs to 98 residues: MASIYLNLMMAFLLALSGVLIYRSHLMSTLLCLEGMMLSLFIMMTLTISHFQMFSLSMAPLILLVFSACEAGIGLALLVKTSNAHGNDHVQNLNLLQC.

A run of 3 helical transmembrane segments spans residues 1 to 21 (MASIYLNLMMAFLLALSGVLI), 26 to 46 (LMSTLLCLEGMMLSLFIMMTL), and 59 to 79 (APLILLVFSACEAGIGLALLV).

This sequence belongs to the complex I subunit 4L family. As to quaternary structure, core subunit of respiratory chain NADH dehydrogenase (Complex I) which is composed of 45 different subunits.

The protein resides in the mitochondrion inner membrane. It catalyses the reaction a ubiquinone + NADH + 5 H(+)(in) = a ubiquinol + NAD(+) + 4 H(+)(out). Core subunit of the mitochondrial membrane respiratory chain NADH dehydrogenase (Complex I) which catalyzes electron transfer from NADH through the respiratory chain, using ubiquinone as an electron acceptor. Part of the enzyme membrane arm which is embedded in the lipid bilayer and involved in proton translocation. This is NADH-ubiquinone oxidoreductase chain 4L (MT-ND4L) from Caenolestes fuliginosus (Shrew opossum).